The chain runs to 867 residues: MVRICIQTPILLSFLLVLLFFISNCFASSQNNDDDKRIRVRVGLVLDLGSVEGKIVRSSVSMALSDFYDNHNDYKTRLSLLVRDSHGEPLLALDSVVDLLQTEGVQAIIGGNSLLEAKLLAELGEKARVPVISLNSPMSLSLSKYTHLIQATHNSASEVKGITAFLHGFDWNSVALVLEDHDDWRESMHFMVDHFHENNVHVQSKVAFSVTSSEDSLMDRLRELKDLGTTVFVVHLSEVIATRLFPCAEKLGMMGEGFAWILTSRSMSSFHDQFIDDLTKEAMEGVVGFKSYIPMSKELHNFTLRWRKTLPVEEVTGSEITRLSISGVWAHDVAWSLASAAEVTRMPTVTSTLLEAIKESRFKGLSGNFQLDDMKLLSDKFEIVNMIGSGERRVGFWNSNGSFSNRRQLSSTHDNLETIIWPGGSAQSPKGRSLRESGRKKLRVLVTSSNRFPRLMKVETDPITHEITIVEGFCIEVFQASIAPFNYEVEYIRWLNGTNYTKLAYALHSQKDKYDAAVGDITITSDRSMYVDFTLPYTEMGLGIVAAKERSMWVFFQPLTPNLWITSAAFFVLTGIIVWLIERAENKEFQGSWPQQIGVVIWFGFSTLVYAHREKLQHNLSRFVVTVWVFAVLILVTSYTATLTSMMTVQQIRFNANEDYVGHLSGSLIANAALTNSSLRAMRLLGLNTSEDYAQALMNKSVSYIVSELPYLKILLGENPGHFLMVKTQSTTNGFGFMFQKGSELAPNVSREIAKLRTSERLNEMERRWFDKQLPYTTDDTSNPITLYRFRGLFMITGVSFAFALAVLLILWLRERWEILVNSVNIYFSQRLRHFRILFTRTIHPSPLGLDNPIGENAVQMAQRNRR.

Residues 1–27 (MVRICIQTPILLSFLLVLLFFISNCFA) form the signal peptide. At 28 to 560 (SSQNNDDDKR…SMWVFFQPLT (533 aa)) the chain is on the extracellular side. N-linked (GlcNAc...) asparagine glycans are attached at residues Asn-301, Asn-400, Asn-496, and Asn-499. Residues 561–581 (PNLWITSAAFFVLTGIIVWLI) form a helical membrane-spanning segment. Topologically, residues 582-590 (ERAENKEFQ) are cytoplasmic. The chain crosses the membrane as a helical span at residues 591-611 (GSWPQQIGVVIWFGFSTLVYA). The Cytoplasmic segment spans residues 612 to 622 (HREKLQHNLSR). The chain crosses the membrane as a helical span at residues 623–643 (FVVTVWVFAVLILVTSYTATL). Topologically, residues 644–792 (TSMMTVQQIR…NPITLYRFRG (149 aa)) are extracellular. 4 N-linked (GlcNAc...) asparagine glycosylation sites follow: Asn-676, Asn-688, Asn-699, and Asn-748. The chain crosses the membrane as a helical span at residues 793–813 (LFMITGVSFAFALAVLLILWL). The Cytoplasmic portion of the chain corresponds to 814–867 (RERWEILVNSVNIYFSQRLRHFRILFTRTIHPSPLGLDNPIGENAVQMAQRNRR).

It belongs to the glutamate-gated ion channel (TC 1.A.10.1) family. In terms of assembly, may form heteromers. Expressed predominantly in roots and siliques.

It localises to the membrane. Functionally, glutamate-gated receptor that probably acts as a non-selective cation channel. May be involved in light-signal transduction and calcium homeostasis via the regulation of calcium influx into cells. The protein is Glutamate receptor 1.2 (GLR1.2) of Arabidopsis thaliana (Mouse-ear cress).